A 206-amino-acid polypeptide reads, in one-letter code: Small ribosomal subunit protein uS4 (206 aa).

The S4 RNA-binding domain occupies 96-158; it reads SRLDNVVYRM…AKGQLRIKGA (63 aa).

The protein belongs to the universal ribosomal protein uS4 family. As to quaternary structure, part of the 30S ribosomal subunit. Contacts protein S5. The interaction surface between S4 and S5 is involved in control of translational fidelity.

One of the primary rRNA binding proteins, it binds directly to 16S rRNA where it nucleates assembly of the body of the 30S subunit. In terms of biological role, with S5 and S12 plays an important role in translational accuracy. This chain is Small ribosomal subunit protein uS4, found in Coxiella burnetii (strain CbuG_Q212) (Coxiella burnetii (strain Q212)).